The following is a 321-amino-acid chain: 4-hydroxy-3-methylbut-2-enyl diphosphate reductase (321 aa).

C12 serves as a coordination point for [4Fe-4S] cluster. H41 and H74 together coordinate (2E)-4-hydroxy-3-methylbut-2-enyl diphosphate. 2 residues coordinate dimethylallyl diphosphate: H41 and H74. Positions 41 and 74 each coordinate isopentenyl diphosphate. Residue C96 coordinates [4Fe-4S] cluster. H124 lines the (2E)-4-hydroxy-3-methylbut-2-enyl diphosphate pocket. Position 124 (H124) interacts with dimethylallyl diphosphate. H124 is an isopentenyl diphosphate binding site. E126 serves as the catalytic Proton donor. T167 contributes to the (2E)-4-hydroxy-3-methylbut-2-enyl diphosphate binding site. C197 lines the [4Fe-4S] cluster pocket. (2E)-4-hydroxy-3-methylbut-2-enyl diphosphate is bound by residues S225, S226, N227, and S269. Residues S225, S226, N227, and S269 each contribute to the dimethylallyl diphosphate site. Residues S225, S226, N227, and S269 each contribute to the isopentenyl diphosphate site.

Belongs to the IspH family. As to quaternary structure, homodimer. The cofactor is [4Fe-4S] cluster.

It carries out the reaction isopentenyl diphosphate + 2 oxidized [2Fe-2S]-[ferredoxin] + H2O = (2E)-4-hydroxy-3-methylbut-2-enyl diphosphate + 2 reduced [2Fe-2S]-[ferredoxin] + 2 H(+). The enzyme catalyses dimethylallyl diphosphate + 2 oxidized [2Fe-2S]-[ferredoxin] + H2O = (2E)-4-hydroxy-3-methylbut-2-enyl diphosphate + 2 reduced [2Fe-2S]-[ferredoxin] + 2 H(+). It participates in isoprenoid biosynthesis; dimethylallyl diphosphate biosynthesis; dimethylallyl diphosphate from (2E)-4-hydroxy-3-methylbutenyl diphosphate: step 1/1. It functions in the pathway isoprenoid biosynthesis; isopentenyl diphosphate biosynthesis via DXP pathway; isopentenyl diphosphate from 1-deoxy-D-xylulose 5-phosphate: step 6/6. Functionally, catalyzes the conversion of 1-hydroxy-2-methyl-2-(E)-butenyl 4-diphosphate (HMBPP) into a mixture of isopentenyl diphosphate (IPP) and dimethylallyl diphosphate (DMAPP). Acts in the terminal step of the DOXP/MEP pathway for isoprenoid precursor biosynthesis. This is 4-hydroxy-3-methylbut-2-enyl diphosphate reductase from Escherichia coli O6:K15:H31 (strain 536 / UPEC).